A 615-amino-acid polypeptide reads, in one-letter code: 1-deoxy-D-xylulose-5-phosphate synthase (615 aa).

Thiamine diphosphate is bound by residues His72 and 111–113 (GHS). Asp142 is a binding site for Mg(2+). Thiamine diphosphate contacts are provided by residues 143 to 144 (GA), Asn171, Tyr278, and Glu360. Asn171 is a binding site for Mg(2+).

It belongs to the transketolase family. DXPS subfamily. Homodimer. Mg(2+) serves as cofactor. Thiamine diphosphate is required as a cofactor.

It carries out the reaction D-glyceraldehyde 3-phosphate + pyruvate + H(+) = 1-deoxy-D-xylulose 5-phosphate + CO2. It functions in the pathway metabolic intermediate biosynthesis; 1-deoxy-D-xylulose 5-phosphate biosynthesis; 1-deoxy-D-xylulose 5-phosphate from D-glyceraldehyde 3-phosphate and pyruvate: step 1/1. Functionally, catalyzes the acyloin condensation reaction between C atoms 2 and 3 of pyruvate and glyceraldehyde 3-phosphate to yield 1-deoxy-D-xylulose-5-phosphate (DXP). This chain is 1-deoxy-D-xylulose-5-phosphate synthase, found in Campylobacter jejuni subsp. doylei (strain ATCC BAA-1458 / RM4099 / 269.97).